Reading from the N-terminus, the 458-residue chain is uncharacterized protein (458 aa).

The protein belongs to the glycerate kinase type-2 family.

This is an uncharacterized protein from Caenorhabditis elegans.